The following is a 294-amino-acid chain: Potassium-transporting ATPase subunit beta (294 aa).

At 1–36 the chain is on the cytoplasmic side; that stretch reads MAALQEKKSCSQRMAEFRQYCWNPDTGQMLGRTPAR. A helical; Signal-anchor for type II membrane protein transmembrane segment spans residues 37–57; sequence WVWISLYYAAFYVVMTGLFAL. The Extracellular segment spans residues 58–294; the sequence is CIYVLMQTID…KVEFKLTIQK (237 aa). N99, N103, N130, N146, and N161 each carry an N-linked (GlcNAc...) asparagine glycan. C131 and C152 form a disulfide bridge. A disulfide bridge connects residues C162 and C178. N193 and N225 each carry an N-linked (GlcNAc...) asparagine glycan. The tract at residues 194–294 is immunoglobulin-like; the sequence is NTAPRVDCTF…KVEFKLTIQK (101 aa). Residues C201 and C266 are joined by a disulfide bond.

It belongs to the X(+)/potassium ATPases subunit beta family. As to quaternary structure, the ATPase pump is composed of two subunits: alpha (catalytic) and beta (regulatory). Interacts with alpha subunit ATP12A; this interaction is required for the formation of a functionally active pump and targeting at the plasma membrane. Interacts (via N-terminus) with alpha subunit ATP4A (via the P-domain). In terms of processing, N-glycosylation is necessary for assembly and functional expression of the pump at the plasma membrane. Stomach.

Its subcellular location is the apical cell membrane. It localises to the cell membrane. The beta subunit of the gastric H(+)/K(+) ATPase pump which transports H(+) ions in exchange for K(+) ions across the apical membrane of parietal cells. Plays a structural and regulatory role in the assembly and membrane targeting of a functionally active pump. Within a transport cycle, the transfer of a H(+) ion across the membrane is coupled to ATP hydrolysis and is associated with a transient phosphorylation of the alpha subunit that shifts the pump conformation from inward-facing (E1) to outward-facing state (E2). Interacts with the phosphorylation domain of the alpha subunit and functions as a ratchet, stabilizing the lumenal-open E2 conformation and preventing the reverse reaction of the transport cycle. This is Potassium-transporting ATPase subunit beta (Atp4b) from Rattus norvegicus (Rat).